A 347-amino-acid chain; its full sequence is NADH-ubiquinone oxidoreductase chain 2 (347 aa).

11 helical membrane passes run 3–23 (PIIF…VMIS), 25–45 (HWLL…PIMM), 67–87 (SMLL…WTVM), 96–116 (MLMT…FWVP), 122–142 (IPLS…MSVL), 145–165 (IFPS…ILIG), 178–198 (IMAY…PYNP), 200–220 (MTLL…TMFM), 239–259 (IMTV…PLSG), 274–294 (NSII…YFYM), and 325–345 (FLPT…MLSV).

It belongs to the complex I subunit 2 family. In terms of assembly, core subunit of respiratory chain NADH dehydrogenase (Complex I) which is composed of 45 different subunits. Interacts with TMEM242.

The protein resides in the mitochondrion inner membrane. It catalyses the reaction a ubiquinone + NADH + 5 H(+)(in) = a ubiquinol + NAD(+) + 4 H(+)(out). Core subunit of the mitochondrial membrane respiratory chain NADH dehydrogenase (Complex I) which catalyzes electron transfer from NADH through the respiratory chain, using ubiquinone as an electron acceptor. Essential for the catalytic activity and assembly of complex I. In Bos indicus (Zebu), this protein is NADH-ubiquinone oxidoreductase chain 2.